The chain runs to 108 residues: UPF0060 membrane protein Mflv_3127 (108 aa).

A run of 4 helical transmembrane segments spans residues 7-27 (LLFV…WQGF), 32-52 (GWLW…VAAF), 61-81 (VLAA…MVAD), and 87-107 (RWDI…MYAP).

Belongs to the UPF0060 family.

Its subcellular location is the cell membrane. The sequence is that of UPF0060 membrane protein Mflv_3127 from Mycolicibacterium gilvum (strain PYR-GCK) (Mycobacterium gilvum (strain PYR-GCK)).